Here is a 555-residue protein sequence, read N- to C-terminus: Urocanate hydratase (555 aa).

NAD(+) is bound by residues 51–52 (GG), Gln-129, 175–177 (GMG), Glu-195, 262–266 (QTSAH), 272–273 (YL), and Tyr-321. Cys-409 is a catalytic residue. An NAD(+)-binding site is contributed by Gly-491.

The protein belongs to the urocanase family. The cofactor is NAD(+).

The protein localises to the cytoplasm. The enzyme catalyses 4-imidazolone-5-propanoate = trans-urocanate + H2O. The protein operates within amino-acid degradation; L-histidine degradation into L-glutamate; N-formimidoyl-L-glutamate from L-histidine: step 2/3. Catalyzes the conversion of urocanate to 4-imidazolone-5-propionate. The polypeptide is Urocanate hydratase (Xanthomonas axonopodis pv. citri (strain 306)).